Here is a 307-residue protein sequence, read N- to C-terminus: MATH domain and coiled-coil domain-containing protein At3g58380 (307 aa).

An MATH domain is found at 6–132 (DKKFVWVIKD…CREITIVIEV (127 aa)). The stretch at 238-290 (KVDWLEKKLKEVKEKKKNVDNGKARLQQIEEDLQKLNQKRLDLKDILDKEKAN) forms a coiled coil.

In Arabidopsis thaliana (Mouse-ear cress), this protein is MATH domain and coiled-coil domain-containing protein At3g58380.